Here is a 390-residue protein sequence, read N- to C-terminus: Cytochrome b (390 aa).

4 helical membrane-spanning segments follow: residues 32-52 (MGSL…FMAM), 76-98 (WFLR…IHMG), 113-133 (LWTI…LGYC), and 179-199 (FFAL…MHMM). Heme b is bound by residues His-82 and His-96. Residues His-183 and His-197 each contribute to the heme b site. His-202 lines the a ubiquinone pocket. A run of 4 helical transmembrane segments spans residues 225-245 (FVFK…LFVF), 289-309 (LMGV…PFTD), 321-341 (LSKL…QIGA), and 348-368 (YILM…VFIP).

It belongs to the cytochrome b family. Fungal cytochrome b-c1 complex contains 10 subunits; 3 respiratory subunits, 2 core proteins and 5 low-molecular weight proteins. Cytochrome b-c1 complex is a homodimer. Heme b is required as a cofactor.

The protein localises to the mitochondrion inner membrane. Component of the ubiquinol-cytochrome c reductase complex (complex III or cytochrome b-c1 complex) that is part of the mitochondrial respiratory chain. The b-c1 complex mediates electron transfer from ubiquinol to cytochrome c. Contributes to the generation of a proton gradient across the mitochondrial membrane that is then used for ATP synthesis. In Naumovozyma castellii (Yeast), this protein is Cytochrome b (COB).